A 206-amino-acid chain; its full sequence is Small ribosomal subunit protein uS4 (206 aa).

Positions 96 to 156 (GRLDNVVYRM…EKAKKQARIK (61 aa)) constitute an S4 RNA-binding domain.

It belongs to the universal ribosomal protein uS4 family. In terms of assembly, part of the 30S ribosomal subunit. Contacts protein S5. The interaction surface between S4 and S5 is involved in control of translational fidelity.

In terms of biological role, one of the primary rRNA binding proteins, it binds directly to 16S rRNA where it nucleates assembly of the body of the 30S subunit. With S5 and S12 plays an important role in translational accuracy. The polypeptide is Small ribosomal subunit protein uS4 (Tolumonas auensis (strain DSM 9187 / NBRC 110442 / TA 4)).